A 1357-amino-acid polypeptide reads, in one-letter code: Ubiquitin carboxyl-terminal hydrolase 19 (1357 aa).

Disordered regions lie at residues 1-52 (MSAG…PTKD), 162-239 (LSPI…SDSA), and 275-296 (VSPRSDSVSPVMIRNRDPEKDD). The Cytoplasmic segment spans residues 1–1330 (MSAGTSATGP…TTSDEGCLRY (1330 aa)). Basic and acidic residues-rich tracts occupy residues 28–52 (DRANQESKDGDPRRVSMPRKEPTKD) and 171–182 (SEPRRAKQEARN). The CS 1 domain occupies 51-140 (KDELLLDWRQ…VPLLTWPSLL (90 aa)). The segment covering 194–206 (SGASPGAQAGPSA) has biased composition (low complexity). Ser221 and Ser283 each carry phosphoserine. The 103-residue stretch at 321–423 (LAFVKNDSYE…RQSQRWGGLE (103 aa)) folds into the CS 2 domain. The disordered stretch occupies residues 432–479 (AKVAVPTGPTPLDSTPPGGGPLPLTGQEEARAVEKEKPKARSEDSGLD). A compositionally biased stretch (low complexity) spans 437 to 457 (PTGPTPLDSTPPGGGPLPLTG). A compositionally biased stretch (basic and acidic residues) spans 459–475 (EEARAVEKEKPKARSED). A USP domain is found at 536–1253 (TGLVNLGNTC…YAYVLFYRRR (718 aa)). Catalysis depends on Cys545, which acts as the Nucleophile. Zn(2+)-binding residues include Cys830, Cys833, Cys847, Cys850, Cys856, Cys860, His868, and Cys872. The MYND-type zinc-finger motif lies at 830-872 (CAACQRKQQSEDEKLKRCTRCYRVGYCNQFCQKTHWPDHKGLC). The interval 962–981 (DTGAHRMWPPADRGPVPSTS) is disordered. His1204 serves as the catalytic Proton acceptor. Basic and acidic residues predominate over residues 1259-1271 (RPPRAAHAEHHPD). Disordered regions lie at residues 1259–1278 (RPPRAAHAEHHPDLGPAAEA) and 1292–1320 (AEEEMVPEGPGPLGPWGPQDWVGPPPRGP). Residues 1331–1351 (FVLGTVAALVALVLNVFYPLV) traverse the membrane as a helical segment. The Lumenal segment spans residues 1352–1357 (SQSRWR).

As to quaternary structure, interacts with RNF123. Interacts with BIRC2/c-IAP1, BIRC3/c-IAP2 and XIAP/BIRC4. Interacts with HIF1A (via N-terminus). Expressed in testis, heart, kidney and skeletal muscle. Low levels of expression are detectable in all other tissues screened.

Its subcellular location is the endoplasmic reticulum membrane. The enzyme catalyses Thiol-dependent hydrolysis of ester, thioester, amide, peptide and isopeptide bonds formed by the C-terminal Gly of ubiquitin (a 76-residue protein attached to proteins as an intracellular targeting signal).. Its function is as follows. Deubiquitinating enzyme that regulates the degradation of various proteins by removing ubiquitin moieties, thereby preventing their proteasomal degradation. Stabilizes RNF123, which promotes CDKN1B degradation and contributes to cell proliferation. Decreases the levels of ubiquitinated proteins during skeletal muscle formation and acts to repress myogenesis. Modulates transcription of major myofibrillar proteins. Also involved in turnover of endoplasmic-reticulum-associated degradation (ERAD) substrates. Mechanistically, deubiquitinates and thereby stabilizes several E3 ligases involved in the ERAD pathway including SYVN1 or MARCHF6. Regulates the stability of other E3 ligases including BIRC2/c-IAP1 and BIRC3/c-IAP2 by preventing their ubiquitination. Required for cells to mount an appropriate response to hypoxia by rescuing HIF1A from degradation in a non-catalytic manner and by mediating the deubiquitination of FUNDC1. Attenuates mitochondrial damage and ferroptosis by targeting and stabilizing NADPH oxidase 4/NOX4. Negatively regulates TNF-alpha- and IL-1beta-triggered NF-kappa-B activation by hydrolyzing 'Lys-27'- and 'Lys-63'-linked polyubiquitin chains from MAP3K7. Modulates also the protein level and aggregation of polyQ-expanded huntingtin/HTT through HSP90AA1. This Rattus norvegicus (Rat) protein is Ubiquitin carboxyl-terminal hydrolase 19 (Usp19).